The following is a 79-amino-acid chain: MPTVRVKEGENPEYALRRFKRSCEKAGILTELRRREFYEKPTAERKRKQAAAVKRHLKKISRDVSSRRGVGHRRKKSTT.

Composition is skewed to basic residues over residues 47–59 and 69–79; these read RKQAAAVKRHLKK and GVGHRRKKSTT. Residues 47–79 form a disordered region; that stretch reads RKQAAAVKRHLKKISRDVSSRRGVGHRRKKSTT.

This sequence belongs to the bacterial ribosomal protein bS21 family.

The polypeptide is Small ribosomal subunit protein bS21 (Legionella pneumophila (strain Paris)).